The sequence spans 277 residues: Acetyl-coenzyme A carboxylase carboxyl transferase subunit beta (277 aa).

In terms of domain architecture, CoA carboxyltransferase N-terminal spans 22-277 (LWTKCPGCNR…TLKQLLYFLT (256 aa)). Residues Cys-26, Cys-29, Cys-45, and Cys-48 each coordinate Zn(2+). A C4-type zinc finger spans residues 26–48 (CPGCNRFLYTKELELNQSVCHYC).

This sequence belongs to the AccD/PCCB family. Acetyl-CoA carboxylase is a heterohexamer composed of biotin carboxyl carrier protein (AccB), biotin carboxylase (AccC) and two subunits each of ACCase subunit alpha (AccA) and ACCase subunit beta (AccD). It depends on Zn(2+) as a cofactor.

It is found in the cytoplasm. The catalysed reaction is N(6)-carboxybiotinyl-L-lysyl-[protein] + acetyl-CoA = N(6)-biotinyl-L-lysyl-[protein] + malonyl-CoA. It participates in lipid metabolism; malonyl-CoA biosynthesis; malonyl-CoA from acetyl-CoA: step 1/1. Its function is as follows. Component of the acetyl coenzyme A carboxylase (ACC) complex. Biotin carboxylase (BC) catalyzes the carboxylation of biotin on its carrier protein (BCCP) and then the CO(2) group is transferred by the transcarboxylase to acetyl-CoA to form malonyl-CoA. This Methylacidiphilum infernorum (isolate V4) (Methylokorus infernorum (strain V4)) protein is Acetyl-coenzyme A carboxylase carboxyl transferase subunit beta.